The sequence spans 91 residues: Small ribosomal subunit protein uS19 (91 aa).

This sequence belongs to the universal ribosomal protein uS19 family.

In terms of biological role, protein S19 forms a complex with S13 that binds strongly to the 16S ribosomal RNA. In Aliarcobacter butzleri (strain RM4018) (Arcobacter butzleri), this protein is Small ribosomal subunit protein uS19.